Here is a 226-residue protein sequence, read N- to C-terminus: 7-cyano-7-deazaguanine synthase (226 aa).

10-20 serves as a coordination point for ATP; the sequence is LSGGLDSATAA. C191, C199, C202, and C205 together coordinate Zn(2+).

It belongs to the QueC family. Zn(2+) is required as a cofactor.

It catalyses the reaction 7-carboxy-7-deazaguanine + NH4(+) + ATP = 7-cyano-7-deazaguanine + ADP + phosphate + H2O + H(+). It participates in purine metabolism; 7-cyano-7-deazaguanine biosynthesis. Catalyzes the ATP-dependent conversion of 7-carboxy-7-deazaguanine (CDG) to 7-cyano-7-deazaguanine (preQ(0)). This is 7-cyano-7-deazaguanine synthase from Prochlorococcus marinus (strain MIT 9303).